We begin with the raw amino-acid sequence, 767 residues long: Polyketide biosynthesis protein PksE (767 aa).

The segment at 1 to 312 (MITYVFPGQG…QRNVQAGITA (312 aa)) is acyl transferase. Catalysis depends on residues Ser87 and His193.

The protein in the N-terminal section; belongs to the FabD family.

It localises to the cytoplasm. It catalyses the reaction holo-[ACP] + malonyl-CoA = malonyl-[ACP] + CoA. Its pathway is antibiotic biosynthesis; bacillaene biosynthesis. Its function is as follows. Probably involved in some intermediate steps for the synthesis of the antibiotic polyketide bacillaene which is involved in secondary metabolism. Probably has an acyl transferase activity and could also have a flavin mononucleotide-dependent oxidoreductase activity. The sequence is that of Polyketide biosynthesis protein PksE (pksE) from Bacillus subtilis (strain 168).